We begin with the raw amino-acid sequence, 234 residues long: MDIKLKDFEGPLDLLLHLVSQYKVDIYEVPIVEVIEQYLNYIETLQVMKLEVAGDYMLMASQLMLIKSRRLLPKVVEHIEEEDLEQDLLEKIEEYSRFKAVSQALAKQHDQRAKWYSKPKQELIFEDAILQEDKTVMDLFLAFSNIMAAKRAVLKNNHTVIERDDYKIEDMMASIKQRLEKENVISLSAIFEECQTLNEVISIFLASLELIKLHVVFVEQLSNFGAIILRKEKK.

It belongs to the ScpA family. As to quaternary structure, component of a cohesin-like complex composed of ScpA, ScpB and the Smc homodimer, in which ScpA and ScpB bind to the head domain of Smc. The presence of the three proteins is required for the association of the complex with DNA.

Its subcellular location is the cytoplasm. Functionally, participates in chromosomal partition during cell division. May act via the formation of a condensin-like complex containing Smc and ScpB that pull DNA away from mid-cell into both cell halves. In Streptococcus pyogenes serotype M3 (strain ATCC BAA-595 / MGAS315), this protein is Segregation and condensation protein A.